A 69-amino-acid chain; its full sequence is Large ribosomal subunit protein uL29 (69 aa).

The protein belongs to the universal ribosomal protein uL29 family.

This is Large ribosomal subunit protein uL29 from Rhodopseudomonas palustris (strain TIE-1).